The chain runs to 264 residues: Short chain dehydrogenase/reductase nsrJ (264 aa).

NADP(+) is bound by residues isoleucine 24, aspartate 70, asparagine 97, and arginine 130. Active-site proton donor residues include serine 146 and serine 147. Residues tyrosine 161, lysine 165, and threonine 196 each coordinate NADP(+). Tyrosine 161 functions as the Proton acceptor in the catalytic mechanism. Lysine 165 (lowers pKa of active site Tyr) is an active-site residue.

This sequence belongs to the short-chain dehydrogenases/reductases (SDR) family.

The protein operates within secondary metabolite biosynthesis. Its function is as follows. Short chain dehydrogenase/reductase; part of the gene cluster that mediates the biosynthesis of the tetrahydroxanthone dimer neosartorin, which exhibits antibacterial activity. The two different monomeric units appear to be synthesized by the same set of enzymes, among which the Baeyer-Villiger monooxygenase nsrF is the key enzyme for the divergence of the biosynthetic routes. The pathway begins with the synthesis of atrochrysone thioester by the polyketide synthase nsrB. The atrochrysone carboxyl ACP thioesterase nsrC then breaks the thioester bond and releases the atrochrysone carboxylic acid from AacuL. Atrochrysone carboxylic acid is decarboxylated by the decarboxylase nsrE, and oxidized by the anthrone oxygenase nsrD to yield emodin. Emodin is then reduced to emodin hydroquinone by the oxidoreductase nsrR. A-ring reduction by the short chain dehydrogenase nsrJ, dehydration by the scytalone dehydratase-like protein nsrI and probable spontaneous re-oxidation, results in overall deoxygenation to chrysophanol. The Baeyer-Villiger monooxygenase nsrF accepts chrysophanol as a substrate to insert one oxygen atom at two different positions to yield the precursors of both monomric units. NsrF is promiscuous/flexible in interacting with the 2 (non methylated and methylated) aromatic rings of chrysophanol, thus diverging the biosynthetic pathway at this point. After the hydrolysis of the lactones, methylesterification by the methyltransferase nsrG yields respectively moniliphenone and 2,2',6'-trihydroxy-4-methyl-6-methoxya-cyldiphenylmethanone. The next steps are the hydroxylation by the FAD-dependent monooxygenase nsrK, followed by isomerization by the monooxygenase nsrQ. The short chain dehydrogenase/reductase nsrO then catalyzes the C-5 ketoreduction to give the xanthone skeleton of blennolide C and 5-acetylblennolide A. The acetyltransferase nsrL has a strict substrate specificity and uses only blennolide A but not blennolide C to yield 5-acetylblennolide A as the single-acetylated product. In the final step of the biosynthesis, the heterodimerization of the 2 xanthones, blennolide C and 5-acetylblennolide A, is catalyzed by the cytochrome P450 monooxygenase nsrP. NsrP can utilize at least three different xanthones as its substrates to perform the dimerization reaction. The polypeptide is Short chain dehydrogenase/reductase nsrJ (Aspergillus novofumigatus (strain IBT 16806)).